The sequence spans 902 residues: Mitochondrial aspartate-glutamate transporter AGC1 (902 aa).

3 Solcar repeats span residues 528-614, 622-710, and 725-813; these read FDSL…MRNR, LSLF…LKKD, and LKTW…FKGF. Helical transmembrane passes span 534–554, 591–611, 622–642, 681–702, 731–751, and 786–806; these read FSLGSIAGCIGATVVYPIDFI, GPQLIGVAPEKAIKLTVNDFM, LSLFPEIISGASAGACQVIFT, GLYNGVAACLMRDVPFSAIYFP, LTAGAIAGMPAAFLTTPFDVI, and FKGGGARVLRSSPQFGFTLAA.

It belongs to the mitochondrial carrier (TC 2.A.29) family.

The protein resides in the mitochondrion inner membrane. In terms of biological role, calcium-dependent mitochondrial aspartate and glutamate carrier. Transport of glutamate in mitochondria is required for mitochondrial transamination reactions and ornithine synthesis. Plays also a role in malate-aspartate NADH shuttle, which is critical for growth on acetate and fatty acids. In Saccharomyces cerevisiae (strain ATCC 204508 / S288c) (Baker's yeast), this protein is Mitochondrial aspartate-glutamate transporter AGC1 (AGC1).